The sequence spans 363 residues: Large ribosomal subunit protein uL4A (363 aa).

Residue Ser-87 is modified to Phosphoserine. The C-terminal-extended nuclear localization signal stretch occupies residues 280 to 363 (PENIISNADV…EKFLTVLHEN (84 aa)).

Belongs to the universal ribosomal protein uL4 family. In terms of assembly, component of the large ribosomal subunit (LSU). Mature yeast ribosomes consist of a small (40S) and a large (60S) subunit. The 40S small subunit contains 1 molecule of ribosomal RNA (18S rRNA) and at least 33 different proteins. The large 60S subunit contains 3 rRNA molecules (25S, 5.8S and 5S rRNA) and at least 46 different proteins. uL4 is associated with the polypeptide exit tunnel. uL4 interacts with its chaperone ACL4 and the nuclear import receptor KAP104.

It localises to the cytoplasm. It is found in the nucleus. Its function is as follows. Component of the ribosome, a large ribonucleoprotein complex responsible for the synthesis of proteins in the cell. The small ribosomal subunit (SSU) binds messenger RNAs (mRNAs) and translates the encoded message by selecting cognate aminoacyl-transfer RNA (tRNA) molecules. The large subunit (LSU) contains the ribosomal catalytic site termed the peptidyl transferase center (PTC), which catalyzes the formation of peptide bonds, thereby polymerizing the amino acids delivered by tRNAs into a polypeptide chain. The nascent polypeptides leave the ribosome through a tunnel in the LSU and interact with protein factors that function in enzymatic processing, targeting, and the membrane insertion of nascent chains at the exit of the ribosomal tunnel. uL4 participates in the regulation of the accumulation of its own mRNA. The chain is Large ribosomal subunit protein uL4A (rpl402) from Schizosaccharomyces pombe (strain 972 / ATCC 24843) (Fission yeast).